Reading from the N-terminus, the 434-residue chain is Methylenetetrahydrofolate--tRNA-(uracil-5-)-methyltransferase TrmFO (434 aa).

10–15 contributes to the FAD binding site; the sequence is GAGLAG.

Belongs to the MnmG family. TrmFO subfamily. FAD serves as cofactor.

The protein localises to the cytoplasm. It catalyses the reaction uridine(54) in tRNA + (6R)-5,10-methylene-5,6,7,8-tetrahydrofolate + NADH + H(+) = 5-methyluridine(54) in tRNA + (6S)-5,6,7,8-tetrahydrofolate + NAD(+). It carries out the reaction uridine(54) in tRNA + (6R)-5,10-methylene-5,6,7,8-tetrahydrofolate + NADPH + H(+) = 5-methyluridine(54) in tRNA + (6S)-5,6,7,8-tetrahydrofolate + NADP(+). Catalyzes the folate-dependent formation of 5-methyl-uridine at position 54 (M-5-U54) in all tRNAs. The protein is Methylenetetrahydrofolate--tRNA-(uracil-5-)-methyltransferase TrmFO of Bacillus cereus (strain ATCC 14579 / DSM 31 / CCUG 7414 / JCM 2152 / NBRC 15305 / NCIMB 9373 / NCTC 2599 / NRRL B-3711).